A 681-amino-acid chain; its full sequence is Cadmium, zinc and cobalt-transporting ATPase (681 aa).

An HMA domain is found at Met1–Gln66. Over Met1–Lys72 the chain is Cytoplasmic. Residues Cys11 and Cys14 each coordinate Cd(2+). Residues Cys11 and Cys14 each coordinate Co(2+). 2 residues coordinate Zn(2+): Cys11 and Cys14. A helical transmembrane segment spans residues Pro73–Ile92. Over His93–His102 the chain is Extracellular. Residues Leu103–Leu124 traverse the membrane as a helical segment. Over Arg125–Gln131 the chain is Cytoplasmic. Residues Phe132–Ala151 form a helical membrane-spanning segment. The Extracellular segment spans residues His152–Glu154. Residues Ala155 to Ala174 traverse the membrane as a helical segment. The Cytoplasmic segment spans residues Arg175 to Pro308. A helical membrane pass occupies residues Ala309–Gly327. Over Asp328–Trp332 the chain is Extracellular. Residues Ile333–Ile350 traverse the membrane as a helical segment. The Cytoplasmic portion of the chain corresponds to Ser351 to Arg630. Asp388 functions as the 4-aspartylphosphate intermediate in the catalytic mechanism. Residues Asp578 and Asp582 each contribute to the Mg(2+) site. The chain crosses the membrane as a helical span at residues Ile631–Ser652. At Gly653 to Ala660 the chain is on the extracellular side. The helical transmembrane segment at Val661–Met676 threads the bilayer. Topologically, residues Arg677 to Ile681 are cytoplasmic.

It belongs to the cation transport ATPase (P-type) (TC 3.A.3) family. Type IB subfamily.

It is found in the cell membrane. It carries out the reaction Zn(2+)(in) + ATP + H2O = Zn(2+)(out) + ADP + phosphate + H(+). It catalyses the reaction Cd(2+)(in) + ATP + H2O = Cd(2+)(out) + ADP + phosphate + H(+). In terms of biological role, couples the hydrolysis of ATP with the transport of cadmium, zinc and cobalt out of the cell. The chain is Cadmium, zinc and cobalt-transporting ATPase (cadA) from Helicobacter felis.